The following is a 208-amino-acid chain: Holliday junction resolvase RecU (208 aa).

The segment at 1-28 is disordered; that stretch reads MNYPNGKPYSKNKPLDGRKSSPFSSNIE. The Mg(2+) site is built by Thr87, Asp89, Glu102, and Gln121.

This sequence belongs to the RecU family. The cofactor is Mg(2+).

It is found in the cytoplasm. The catalysed reaction is Endonucleolytic cleavage at a junction such as a reciprocal single-stranded crossover between two homologous DNA duplexes (Holliday junction).. Functionally, endonuclease that resolves Holliday junction intermediates in genetic recombination. Cleaves mobile four-strand junctions by introducing symmetrical nicks in paired strands. Promotes annealing of linear ssDNA with homologous dsDNA. Required for DNA repair, homologous recombination and chromosome segregation. This Staphylococcus epidermidis (strain ATCC 12228 / FDA PCI 1200) protein is Holliday junction resolvase RecU.